Consider the following 508-residue polypeptide: Maturase K (508 aa).

Belongs to the intron maturase 2 family. MatK subfamily.

It is found in the plastid. It localises to the chloroplast. Usually encoded in the trnK tRNA gene intron. Probably assists in splicing its own and other chloroplast group II introns. This is Maturase K from Manilkara zapota (Sapodilla plum).